We begin with the raw amino-acid sequence, 99 residues long: Nucleoid-associated protein LCABL_24440 (99 aa).

The protein belongs to the YbaB/EbfC family. In terms of assembly, homodimer.

Its subcellular location is the cytoplasm. It localises to the nucleoid. In terms of biological role, binds to DNA and alters its conformation. May be involved in regulation of gene expression, nucleoid organization and DNA protection. The polypeptide is Nucleoid-associated protein LCABL_24440 (Lacticaseibacillus casei (strain BL23) (Lactobacillus casei)).